A 472-amino-acid polypeptide reads, in one-letter code: Ribosomal protein uS12 methylthiotransferase RimO (472 aa).

The region spanning 22-133 (PSVAFAHLGC…IVDVLKRVEA (112 aa)) is the MTTase N-terminal domain. [4Fe-4S] cluster contacts are provided by Cys-31, Cys-67, Cys-96, Cys-171, Cys-175, and Cys-178. A Radical SAM core domain is found at 157–386 (TTDQAVAYLK…MALQQPISAE (230 aa)). The TRAM domain maps to 389–460 (QRWVGRTIDV…VYDLTGQLVD (72 aa)).

The protein belongs to the methylthiotransferase family. RimO subfamily. It depends on [4Fe-4S] cluster as a cofactor.

It is found in the cytoplasm. It carries out the reaction L-aspartate(89)-[ribosomal protein uS12]-hydrogen + (sulfur carrier)-SH + AH2 + 2 S-adenosyl-L-methionine = 3-methylsulfanyl-L-aspartate(89)-[ribosomal protein uS12]-hydrogen + (sulfur carrier)-H + 5'-deoxyadenosine + L-methionine + A + S-adenosyl-L-homocysteine + 2 H(+). In terms of biological role, catalyzes the methylthiolation of an aspartic acid residue of ribosomal protein uS12. The protein is Ribosomal protein uS12 methylthiotransferase RimO of Prochlorococcus marinus (strain MIT 9303).